We begin with the raw amino-acid sequence, 142 residues long: Hemoglobin subunit alpha (142 aa).

A Globin domain is found at 2-142; that stretch reads VLSPADKSNV…VSTVLTSKYR (141 aa). At Ser4 the chain carries Phosphoserine. N6-succinyllysine occurs at positions 8 and 12. Position 17 is an N6-acetyllysine; alternate (Lys17). Lys17 carries the N6-succinyllysine; alternate modification. The residue at position 25 (Tyr25) is a Phosphotyrosine. Phosphoserine is present on Ser36. N6-succinyllysine is present on Lys41. Ser50 carries the phosphoserine modification. His59 serves as a coordination point for O2. His88 serves as a coordination point for heme b. Ser103 carries the post-translational modification Phosphoserine. Thr109 is modified (phosphothreonine). Residues Ser125 and Ser132 each carry the phosphoserine modification. A phosphothreonine mark is found at Thr135 and Thr138. Ser139 bears the Phosphoserine mark.

This sequence belongs to the globin family. In terms of assembly, heterotetramer of two alpha chains and two beta chains. As to expression, red blood cells.

Its function is as follows. Involved in oxygen transport from the lung to the various peripheral tissues. Functionally, hemopressin acts as an antagonist peptide of the cannabinoid receptor CNR1. Hemopressin-binding efficiently blocks cannabinoid receptor CNR1 and subsequent signaling. In Ateles geoffroyi (Black-handed spider monkey), this protein is Hemoglobin subunit alpha (HBA).